Consider the following 93-residue polypeptide: Cobalt transport protein CbiN (93 aa).

A run of 2 helical transmembrane segments spans residues 5-25 and 62-82; these read LILL…DHGG and SLLF…ILGY.

Belongs to the CbiN family. In terms of assembly, forms an energy-coupling factor (ECF) transporter complex composed of an ATP-binding protein (A component, CbiO), a transmembrane protein (T component, CbiQ) and 2 possible substrate-capture proteins (S components, CbiM and CbiN) of unknown stoichimetry.

The protein localises to the cell inner membrane. Its pathway is cofactor biosynthesis; adenosylcobalamin biosynthesis. Functionally, part of the energy-coupling factor (ECF) transporter complex CbiMNOQ involved in cobalt import. This Citrobacter koseri (strain ATCC BAA-895 / CDC 4225-83 / SGSC4696) protein is Cobalt transport protein CbiN.